The following is a 392-amino-acid chain: Succinate--CoA ligase [ADP-forming] subunit beta (392 aa).

An ATP-grasp domain is found at 9–236 (RDLFERHGLP…QAAVDPLEQA (228 aa)). ATP-binding positions include Lys-45, 52–54 (GRG), Ala-94, and Glu-99. Residues Asn-191 and Asp-205 each coordinate Mg(2+). Substrate is bound by residues Asn-256 and 318-320 (GIT).

It belongs to the succinate/malate CoA ligase beta subunit family. As to quaternary structure, heterotetramer of two alpha and two beta subunits. The cofactor is Mg(2+).

It carries out the reaction succinate + ATP + CoA = succinyl-CoA + ADP + phosphate. It catalyses the reaction GTP + succinate + CoA = succinyl-CoA + GDP + phosphate. Its pathway is carbohydrate metabolism; tricarboxylic acid cycle; succinate from succinyl-CoA (ligase route): step 1/1. Its function is as follows. Succinyl-CoA synthetase functions in the citric acid cycle (TCA), coupling the hydrolysis of succinyl-CoA to the synthesis of either ATP or GTP and thus represents the only step of substrate-level phosphorylation in the TCA. The beta subunit provides nucleotide specificity of the enzyme and binds the substrate succinate, while the binding sites for coenzyme A and phosphate are found in the alpha subunit. The polypeptide is Succinate--CoA ligase [ADP-forming] subunit beta (Salinispora tropica (strain ATCC BAA-916 / DSM 44818 / JCM 13857 / NBRC 105044 / CNB-440)).